Reading from the N-terminus, the 881-residue chain is Valine--tRNA ligase (881 aa).

The short motif at 48–58 (PNITGKLHLGH) is the 'HIGH' region element. The 'KMSKS' region signature appears at 527-531 (KMSKS). ATP is bound at residue K530. Coiled-coil stretches lie at residues 721 to 747 (KNET…AEMN) and 811 to 881 (LLDL…AALK).

The protein belongs to the class-I aminoacyl-tRNA synthetase family. ValS type 1 subfamily. In terms of assembly, monomer.

Its subcellular location is the cytoplasm. The catalysed reaction is tRNA(Val) + L-valine + ATP = L-valyl-tRNA(Val) + AMP + diphosphate. Functionally, catalyzes the attachment of valine to tRNA(Val). As ValRS can inadvertently accommodate and process structurally similar amino acids such as threonine, to avoid such errors, it has a 'posttransfer' editing activity that hydrolyzes mischarged Thr-tRNA(Val) in a tRNA-dependent manner. In Clostridium acetobutylicum (strain ATCC 824 / DSM 792 / JCM 1419 / IAM 19013 / LMG 5710 / NBRC 13948 / NRRL B-527 / VKM B-1787 / 2291 / W), this protein is Valine--tRNA ligase.